The sequence spans 549 residues: Plant intracellular Ras-group-related LRR protein 4 (549 aa).

A compositionally biased stretch (low complexity) spans 119 to 140; the sequence is SPSSNGSVSSRPPLPPATTTAA. The segment at 119–167 is disordered; that stretch reads SPSSNGSVSSRPPLPPATTTAARSDSQSSLNFSERAPVRPKDMVSRDDS. The segment covering 141-150 has biased composition (polar residues); sequence RSDSQSSLNF. The segment covering 154–167 has biased composition (basic and acidic residues); that stretch reads APVRPKDMVSRDDS. Ser167 carries the phosphoserine modification. LRR repeat units lie at residues 245-268, 269-291, 293-313, 314-337, 339-360, 362-383, 384-406, 407-430, 432-454, 455-476, and 478-500; these read LSSL…IGGL, SSLT…IGEL, NLVY…AFSR, LVRL…IGSL, SLKK…IGGC, SLIE…IGKI, TTLE…MSSL, ASLK…CFAT, LVKL…IGNL, EMLE…SFKM, and TKLR…IAEK. The short motif at 501–508 is the GVYW; degenerate element; that stretch reads GPQAVVQY.

Belongs to the SHOC2 family. Widely expressed.

In terms of biological role, leucine-rich repeat protein that likely mediates protein interactions, possibly in the context of signal transduction. This Arabidopsis thaliana (Mouse-ear cress) protein is Plant intracellular Ras-group-related LRR protein 4 (PIRL4).